The sequence spans 60 residues: UPF0434 protein HCH_02705 (60 aa).

The protein belongs to the UPF0434 family.

The polypeptide is UPF0434 protein HCH_02705 (Hahella chejuensis (strain KCTC 2396)).